We begin with the raw amino-acid sequence, 171 residues long: Voltage-dependent P/Q-type calcium channel subunit alpha-1A (171 aa).

A helical membrane pass occupies residues 1–11; it reads FVTVLGSITDI. The stretch at 1-171 is one IV repeat; it reads FVTVLGSITD…LMLNLFVAVI (171 aa). The Extracellular portion of the chain corresponds to 12–18; the sequence is LVTEFGN. The chain crosses the membrane as a helical span at residues 19–37; sequence NFINLSFLRLFRAARLIKL. Over 38–56 the chain is Cytoplasmic; sequence LRQGYTIRILLWTFVQSFK. A helical transmembrane segment spans residues 57-76; it reads ALPYVCLLIAMLFFIYAIIG. Residues 77–143 lie on the Extracellular side of the membrane; sequence MQVFGNIGIE…ENSGIKEDEC (67 aa). Residues 144–168 form a helical membrane-spanning segment; sequence GNEFAYFYFVSFIFLCSFLMLNLFV. Residues 169-171 are Cytoplasmic-facing; sequence AVI.

The protein belongs to the calcium channel alpha-1 subunit (TC 1.A.1.11) family. CACNA1A subfamily. As to quaternary structure, voltage-dependent calcium channels are multisubunit complexes, consisting of alpha-1, alpha-2, beta and delta subunits in a 1:1:1:1 ratio. The channel activity is directed by the pore-forming and voltage-sensitive alpha-1 subunit. In many cases, this subunit is sufficient to generate voltage-sensitive calcium channel activity. The auxiliary subunits beta and alpha-2/delta linked by a disulfide bridge regulate the channel activity.

It is found in the cell membrane. It carries out the reaction Ca(2+)(in) = Ca(2+)(out). In terms of biological role, the isoform alpha-1A gives rise to P and/or Q-type calcium currents. P/Q-type calcium channels belong to the 'high-voltage activated' (HVA) group. This Gallus gallus (Chicken) protein is Voltage-dependent P/Q-type calcium channel subunit alpha-1A (CACNA1A).